The following is a 155-amino-acid chain: SsrA-binding protein (155 aa).

It belongs to the SmpB family.

It localises to the cytoplasm. Its function is as follows. Required for rescue of stalled ribosomes mediated by trans-translation. Binds to transfer-messenger RNA (tmRNA), required for stable association of tmRNA with ribosomes. tmRNA and SmpB together mimic tRNA shape, replacing the anticodon stem-loop with SmpB. tmRNA is encoded by the ssrA gene; the 2 termini fold to resemble tRNA(Ala) and it encodes a 'tag peptide', a short internal open reading frame. During trans-translation Ala-aminoacylated tmRNA acts like a tRNA, entering the A-site of stalled ribosomes, displacing the stalled mRNA. The ribosome then switches to translate the ORF on the tmRNA; the nascent peptide is terminated with the 'tag peptide' encoded by the tmRNA and targeted for degradation. The ribosome is freed to recommence translation, which seems to be the essential function of trans-translation. This Streptococcus equi subsp. zooepidemicus (strain MGCS10565) protein is SsrA-binding protein.